Reading from the N-terminus, the 193-residue chain is Small ribosomal subunit protein eS7 (193 aa).

This sequence belongs to the eukaryotic ribosomal protein eS7 family.

The chain is Small ribosomal subunit protein eS7 (rps7) from Dictyostelium discoideum (Social amoeba).